The sequence spans 179 residues: Probable chorismate pyruvate-lyase (179 aa).

Residues arginine 82, leucine 120, and glutamate 165 each contribute to the substrate site.

Belongs to the UbiC family.

The protein localises to the cytoplasm. The catalysed reaction is chorismate = 4-hydroxybenzoate + pyruvate. It functions in the pathway cofactor biosynthesis; ubiquinone biosynthesis. Functionally, removes the pyruvyl group from chorismate, with concomitant aromatization of the ring, to provide 4-hydroxybenzoate (4HB) for the ubiquinone pathway. In Vibrio vulnificus (strain YJ016), this protein is Probable chorismate pyruvate-lyase.